The primary structure comprises 59 residues: Protein B3 (59 aa).

In Homo sapiens (Human), this protein is Protein B3 (B3).